The sequence spans 387 residues: MSVIKMTDLDLSGKRVFIRADLNVPVKDGKVTSDARIRATIPTLKLALEKGAKVMVTSHLGRPTEGEFDEANSLKPVVDYLNANLDVPVRLVRDYLDGVDVNQGEIVVLENVRINKGEKKNDPELGKKYAALCDVFVMDAFGTAHRAQASTYGVAEYAPVACAGPLLAAELDALGKALKEPARPMVAIVGGSKVSTKLEVLNSLSKIADQIIVGGGIANTFIAAAGHNVGKSLYEEDLIPVAKNLAASTDIPVPVDVRVGLEFSETAAATEKAVNEVKDDESIFDIGDKSAEQLAEIIKNAKTILWNGPVGVFEFPNFRKGTEIISHAIANSEGFSIAGGGDTLAAIDLFGIKDKISYISTGGGAFLEFVEGKVLPAVEILEKRANG.

Substrate-binding positions include 21 to 23 (DLN), arginine 36, 59 to 62 (HLGR), arginine 113, and arginine 146. Residues lysine 197, glutamate 314, and 340-343 (GGDT) each bind ATP.

Belongs to the phosphoglycerate kinase family. Monomer.

The protein localises to the cytoplasm. The enzyme catalyses (2R)-3-phosphoglycerate + ATP = (2R)-3-phospho-glyceroyl phosphate + ADP. The protein operates within carbohydrate degradation; glycolysis; pyruvate from D-glyceraldehyde 3-phosphate: step 2/5. The polypeptide is Phosphoglycerate kinase (pgk) (Pasteurella multocida (strain Pm70)).